The following is a 323-amino-acid chain: tRNA U34 carboxymethyltransferase (323 aa).

Residues Lys-91, Trp-105, Lys-110, Gly-130, 152 to 154 (DPT), 181 to 182 (IE), Met-196, Tyr-200, and Arg-315 contribute to the carboxy-S-adenosyl-L-methionine site.

Belongs to the class I-like SAM-binding methyltransferase superfamily. CmoB family. In terms of assembly, homotetramer.

It carries out the reaction carboxy-S-adenosyl-L-methionine + 5-hydroxyuridine(34) in tRNA = 5-carboxymethoxyuridine(34) in tRNA + S-adenosyl-L-homocysteine + H(+). In terms of biological role, catalyzes carboxymethyl transfer from carboxy-S-adenosyl-L-methionine (Cx-SAM) to 5-hydroxyuridine (ho5U) to form 5-carboxymethoxyuridine (cmo5U) at position 34 in tRNAs. This Cronobacter sakazakii (strain ATCC BAA-894) (Enterobacter sakazakii) protein is tRNA U34 carboxymethyltransferase.